The sequence spans 254 residues: Mitochondrial cardiolipin hydrolase (254 aa).

Residues 1–9 (MERFRWQVA) lie on the Mitochondrial intermembrane side of the membrane. Residues 1–43 (MERFRWQVAAVAAVGLALALEALPSVLCWLRAGRRQQQRPPRR) are required for mitochondrial localization. Residues 10 to 32 (AVAAVGLALALEALPSVLCWLRA) traverse the membrane as a helical segment. The Cytoplasmic portion of the chain corresponds to 33–254 (GRRQQQRPPR…SKCSHHLSQV (222 aa)). A C3H1-type; atypical zinc finger spans residues 49 to 82 (PSQVTCTEALLQAPGEAPSGPPAGCRCSLPHGES). Residues 155-182 (DLGYMHHKFAIVDKKVLITGSLNWTTQA) form the PLD phosphodiesterase domain. Residues His-160, Lys-162, and Asp-167 contribute to the active site.

It belongs to the phospholipase D family. MitoPLD/Zucchini subfamily. Homodimer. Interacts with MOV10L1. Interacts with MIGA1 and MIGA2; possibly facilitating homodimer formation. Interacts with GK2.

The protein localises to the mitochondrion outer membrane. It is found in the nucleus membrane. Its subcellular location is the cell membrane. It localises to the golgi apparatus. It carries out the reaction a cardiolipin + H2O = a 1,2-diacyl-sn-glycero-3-phospho-(1'-sn-glycerol) + a 1,2-diacyl-sn-glycero-3-phosphate + H(+). Its activity is regulated as follows. Single stranded DNA (ssDNA) hydrolase activity does not depend upon, but is stimulated by the presence of Ca(2+) and Mn(2+). MIGA1 and MIGA2 increase PLD6 self-association affinity and affects the homodimer conformation facilitating its phospholipase activity over the nuclease activity. MYC induces its expression and stimulates its phospholipase activity. Presents phospholipase and nuclease activities, depending on the different physiological conditions. Interaction with Mitoguardin (MIGA1 or MIGA2) affects the dimer conformation, facilitating the lipase activity over the nuclease activity. Plays a key role in mitochondrial fusion and fission via its phospholipase activity. In its phospholipase role, it uses the mitochondrial lipid cardiolipin as substrate to generate phosphatidate (PA or 1,2-diacyl-sn-glycero-3-phosphate), a second messenger signaling lipid. Production of PA facilitates Mitofusin-mediated fusion, whereas the cleavage of PA by the Lipin family of phosphatases produces diacylgycerol (DAG) which promotes mitochondrial fission. Both Lipin and DAG regulate mitochondrial dynamics and membrane fusion/fission, important processes for adapting mitochondrial metabolism to changes in cell physiology. Mitochondrial fusion enables cells to cope with the increased nucleotide demand during DNA synthesis. Mitochondrial function and dynamics are closely associated with biological processes such as cell growth, proliferation, and differentiation. Mediator of MYC activity, promotes mitochondrial fusion and activates AMPK which in turn inhibits YAP/TAZ, thereby inducing cell growth and proliferation. The endonuclease activity plays a critical role in PIWI-interacting RNA (piRNA) biogenesis during spermatogenesis. Implicated in spermatogenesis and sperm fertility in testicular germ cells, its single strand-specific nuclease activity is critical for the biogenesis/maturation of PIWI-interacting RNA (piRNA). MOV10L1 selectively binds to piRNA precursors and funnels them to the endonuclease that catalyzes the first cleavage step of piRNA processing to generate piRNA intermediate fragments that are subsequently loaded to Piwi proteins. Cleaves either DNA or RNA substrates with similar affinity, producing a 5' phosphate end, in this way it participates in the processing of primary piRNA transcripts. piRNAs provide essential protection against the activity of mobile genetic elements. piRNA-mediated transposon silencing is thus critical for maintaining genome stability, in particular in germline cells when transposons are mobilized as a consequence of wide-spread genomic demethylation. PA may act as signaling molecule in the recognition/transport of the precursor RNAs of primary piRNAs. Interacts with tesmin in testes, suggesting a role in spermatogenesis via association with its interacting partner. This is Mitochondrial cardiolipin hydrolase (PLD6) from Canis lupus familiaris (Dog).